The primary structure comprises 823 residues: MEEIEDKEPRQENEELKIPDVLPLLPVRDVVVYPYMILPLFVGREISINAVDQALSRDRLIFLATQKEMGDEEPTPEGMYTVGTVAMIMRMLKLPDGRVKVLVQGLAKGLITEFVESKPAYTVRIERIVEPSVPEESLETEALMRAVKEQLTQIVSLGKAVSPEVLVIVENMQEPGSLADLIASNIGLKVDDAQALLEIIDPVQRLQKVNEHLNKEHELLDMQVKIQSAAKEEMGKSQREYFLREQLRAIQQELGETDPRSEELNELRKAIEQAKMPPVVEKEAFKQLGRLEQMHPDAAEAGMLRTFLDWMVELPWGKATKDVLDIKRARQILDEDHFYLEKIKERILEFLAVRKLRKKMKGPILCFVGPPGVGKTSLGKSIARAMGRKFVRISLGGVRDEAEIRGHRRTYVGALPGRIIQGLKQAGSNNPVFMLDELDKLGADFRGDPSSALLEVLDPEQNHMFSDHYINLPFNLSNVMFIATANQIDTVPGPLRDRMEVIQLSGYTEEEKLEIAKRYLIPRQMKENGISEKEIVISDEAVRTIIAKYTREAGLRNLEREIGSVCRKVARKVAEGDGRRFRITPATVAKYLGPARFIREGEMEKNEVGIVTGLAWTPVGGEVLFVEATIMKGKGGLTLTGHLGDVMKESVQAALSYIRSKAKEFHLAEDFLSGYDIHVHVPAGAIPKDGPSAGVTMATALVSALTRVPVRKDVAMTGEITLRGKVLPIGGLKEKMLAAIRAGIKTIVIPEQNEKDLEEIPKHILKKVTVVSAKVIDDVLAVALETFPPPPPASEGKPAATVKAPPRRGIAAPRKGAMAGAKS.

Residues 22 to 217 (LPLLPVRDVV…KVNEHLNKEH (196 aa)) enclose the Lon N-terminal domain. 369–376 (GPPGVGKT) provides a ligand contact to ATP. The Lon proteolytic domain occupies 605–786 (KNEVGIVTGL…DDVLAVALET (182 aa)). Active-site residues include Ser692 and Lys735. The segment at 788–823 (PPPPPASEGKPAATVKAPPRRGIAAPRKGAMAGAKS) is disordered.

This sequence belongs to the peptidase S16 family. As to quaternary structure, homohexamer. Organized in a ring with a central cavity.

The protein localises to the cytoplasm. The enzyme catalyses Hydrolysis of proteins in presence of ATP.. Its function is as follows. ATP-dependent serine protease that mediates the selective degradation of mutant and abnormal proteins as well as certain short-lived regulatory proteins. Required for cellular homeostasis and for survival from DNA damage and developmental changes induced by stress. Degrades polypeptides processively to yield small peptide fragments that are 5 to 10 amino acids long. Binds to DNA in a double-stranded, site-specific manner. The polypeptide is Lon protease (Geobacter metallireducens (strain ATCC 53774 / DSM 7210 / GS-15)).